The primary structure comprises 1218 residues: NACHT, LRR and PYD domains-containing protein 1a allele 3 (1218 aa).

A compositionally biased stretch (polar residues) spans 1-29 (MGESQSKQESNTRVAQHGSQQDVDPTFQT). Disordered regions lie at residues 1-44 (MGES…QVEQ) and 71-91 (EMDHESRRHSHQSKKKLDRSE). A compositionally biased stretch (basic residues) spans 77–87 (RRHSHQSKKKL). The NACHT domain maps to 175 to 484 (QLVIIEGAAG…EFFAAMSYIL (310 aa)). 181-188 (GAAGIGKS) provides a ligand contact to ATP. 3 LRR repeats span residues 343–364 (KERNTIIDFNLIGSIPVLLTLC), 673–693 (NLEELDLSGNPLSYSAVRSLC), and 730–750 (RLAELDLRLNDLGDNGVRQLC). The span at 799-815 (TMPTENTDGEESLTSSK) shows a compositional bias: polar residues. Residues 799–842 (TMPTENTDGEESLTSSKQQQQQSGDKHMEPLGTDDDFWGPSGPV) are disordered. The ZU5 stretch occupies residues 835–968 (FWGPSGPVST…HFAVLENPSF (134 aa)). The FIIND domain occupies 835–1118 (FWGPSGPVST…LRPALPRMAS (284 aa)). Residues 969 to 1118 (SPMGVLLRMI…LRPALPRMAS (150 aa)) are UPA. Positions 1122 to 1211 (DAPALLHFVD…HLIMDLLEKS (90 aa)) constitute a CARD domain.

It belongs to the NLRP family. In terms of assembly, interacts (via LRR repeats) with BCL2 and BCL2L1 (via the loop between motifs BH4 and BH3). Interacts with NOD2; this interaction is enhanced in the presence of muramyl dipeptide (MDP) and increases IL1B release. Interacts with EIF2AK2/PKR; this interaction requires EIF2AK2 activity, is accompanied by EIF2AK2 autophosphorylation and promotes inflammasome assembly in response to danger-associated signals. Interacts with MEFV; this interaction targets Nlrp1a to degradation by autophagy, hence preventing excessive IL1B- and IL18-mediated inflammation. Interacts with DPP9; leading to inhibit activation of the inflammasome. DPP9 acts via formation of a ternary complex, composed of a DPP9 homodimer, one full-length NLRP1 protein, and one cleaved C-terminus of Nlrp1a (NACHT, LRR and PYD domains-containing protein 1a, C-terminus). Interacts with DPP8; leading to inhibit activation of the inflammasome, probably via formation of a ternary complex with DPP8. As to quaternary structure, interacts with the C-terminal part of Nlrp1a (NACHT, LRR and PYD domains-containing protein 1a, C-terminus) in absence of pathogens and other damage-associated signals. Interacts with the N-terminal part of Nlrp1a (NACHT, LRR and PYD domains-containing protein 1a, N-terminus) in absence of pathogens and other damage-associated signals. Homomultimer; forms the Nlrp1a inflammasome polymeric complex, a filament composed of homopolymers of this form in response to pathogens and other damage-associated signals. The Nlrp1a inflammasome polymeric complex directly recruits pro-caspase-1 (proCASP1) independently of PYCARD/ASC. Interacts (via CARD domain) with CASP1 (via CARD domain); leading to CASP1 activation. Autocatalytically cleaved. Autocatalytic cleavage in FIIND region occurs constitutively, prior to activation signals, and is required for inflammasome activity (IL1B release), possibly by facilitating CASP1 binding. Both N- and C-terminal parts remain associated non-covalently. Post-translationally, ubiquitinated in response to pathogen-associated signals, leading to its degradation by the proteasome and subsequent release of the cleaved C-terminal part of the protein (NACHT, LRR and PYD domains-containing protein 1a, C-terminus), which polymerizes and forms the Nlrp1a inflammasome.

It localises to the cytoplasm. Its subcellular location is the cytosol. The protein localises to the nucleus. The protein resides in the inflammasome. Activated by pathogens and other damage-associated signals: activation promotes ubiquitination and degradation of the N-terminal part, releasing the cleaved C-terminal part of the protein (NACHT, LRR and PYD domains-containing protein 1a, C-terminus), which polymerizes and forms the Nlrp1a inflammasome. Nlrp1a inflammasome is inhibited by DPP8 and DPP9, which sequester the C-terminal fragment of Nlrp1a (NACHT, LRR and PYD domains-containing protein 1a, C-terminus) in a ternary complex, thereby preventing Nlrp1a oligomerization and activation. Nlrp1a inflammasome is strongly activated by Val-boroPro (Talabostat, PT-100), an inhibitor of dipeptidyl peptidases DPP8 and DPP9. Val-boroPro relieves inhibition of DPP8 and/or DPP9 by promoting disruption of the ternary complex, releasing its C-terminal part from autoinhibition. Not activated by cleavage by B.anthracis lethal toxin (LT) endopeptidase. Functionally, acts as the sensor component of the Nlrp1a inflammasome, which mediates inflammasome activation in response to various pathogen-associated signals, leading to subsequent pyroptosis. Inflammasomes are supramolecular complexes that assemble in the cytosol in response to pathogens and other damage-associated signals and play critical roles in innate immunity and inflammation. Acts as a recognition receptor (PRR): recognizes specific pathogens and other damage-associated signals, such as Val-boroPro inhibitor, and mediates the formation of the inflammasome polymeric complex. In response to pathogen-associated signals, the N-terminal part of Nlrp1a is degraded by the proteasome, releasing the cleaved C-terminal part of the protein (NACHT, LRR and PYD domains-containing protein 1a, C-terminus), which polymerizes to initiate the formation of the inflammasome complex: the inflammasome directly recruits pro-caspase-1 (proCASP1) independently of PYCARD/ASC and promotes caspase-1 (CASP1) activation, which subsequently cleaves and activates inflammatory cytokines IL1B and IL18 and gasdermin-D (GSDMD), leading to pyroptosis. In the absence of GSDMD expression, the Nlrp1a inflammasome is able to recruit and activate CASP8, leading to activation of gasdermin-E (GSDME). In terms of biological role, constitutes the precursor of the Nlrp1a inflammasome, which mediates autoproteolytic processing within the FIIND domain to generate the N-terminal and C-terminal parts, which are associated non-covalently in absence of pathogens and other damage-associated signals. Its function is as follows. Regulatory part that prevents formation of the Nlrp1a inflammasome: in absence of pathogens and other damage-associated signals, interacts with the C-terminal part of Nlrp1a (NACHT, LRR and PYD domains-containing protein 1a, C-terminus), preventing activation of the Nlrp1a inflammasome. In response to pathogen-associated signals, this part is ubiquitinated by the N-end rule pathway and degraded by the proteasome, releasing the cleaved C-terminal part of the protein, which polymerizes and forms the Nlrp1a inflammasome. Constitutes the active part of the Nlrp1a inflammasome. In absence of pathogens and other damage-associated signals, interacts with the N-terminal part of Nlrp1a (NACHT, LRR and PYD domains-containing protein 1a, N-terminus), preventing activation of the Nlrp1a inflammasome. In response to pathogen-associated signals, the N-terminal part of Nlrp1a is degraded by the proteasome, releasing this form, which polymerizes to form the Nlrp1a inflammasome complex: the Nlrp1a inflammasome complex then directly recruits pro-caspase-1 (proCASP1) and promotes caspase-1 (CASP1) activation, leading to gasdermin-D (GSDMD) cleavage and subsequent pyroptosis. The polypeptide is NACHT, LRR and PYD domains-containing protein 1a allele 3 (Rattus norvegicus (Rat)).